The sequence spans 111 residues: WAP four-disulfide core domain protein 12 (111 aa).

An N-terminal signal peptide occupies residues 1-23 (MGSSSFLVLMVSLTLVTLVAVEG). The WAP domain maps to 27-74 (DIEKAGVCPADNVRCFKSDPPQCHTDQDCLGERKCCYLHCGFKCVIPV). Intrachain disulfides connect cysteine 34/cysteine 62, cysteine 41/cysteine 66, cysteine 49/cysteine 61, and cysteine 55/cysteine 70. The segment at 80-111 (GGNKDEDVSRPYPEPGWEAKCPGSSSTRCPQK) is disordered. Positions 102–111 (GSSSTRCPQK) are enriched in polar residues.

It is found in the secreted. In terms of biological role, antibacterial protein. Putative acid-stable proteinase inhibitor. The protein is WAP four-disulfide core domain protein 12 (WFDC12) of Pan troglodytes (Chimpanzee).